A 599-amino-acid polypeptide reads, in one-letter code: Putative fused cobalt transport protein CbiMQ (599 aa).

Residues 1-239 (MHIMEGFLPS…LLPSSDQNLS (239 aa)) are cbiM. Helical transmembrane passes span 12-32 (WWQFWALLAVVCVLAGMAALI), 44-64 (LLGLAGACVFILSSLKLPSVG), 74-94 (FGAILFGPAVCSVFCTIVLVF), 106-126 (TLGANIISMGVAGPLAACIIF), 140-160 (SFSVTVFCAAAAADLVTYMMT), 162-182 (LQLALAYPAAEGGVLASFVVY), 183-203 (LGIFSITQVPLAVLEGILIVL), 247-267 (IIAGIIVVLLTASLAFLLAGL), 303-323 (WLFALQAGIGAAVLVFCLYLL), 356-376 (QVSAWLKLLFCLSAIIIGVTS), 377-397 (PLPYLPLFIAGVMIFAALIIA), 407-427 (LLTIPLVFAGTGAAVILLITG), 438-458 (IGAFHFQITTTSLELAALVLS), 463-483 (GMCSLYFLTLTTPITSLFSVL), 493-513 (IDLSMLIYRYIFVFIGEAIAI), and 579-599 (MAVFLFIALIFGLLCAEMLLL). The interval 341 to 599 (DEHILDDVAI…GLLCAEMLLL (259 aa)) is cbiQ.

This sequence in the N-terminal section; belongs to the CbiM family. The protein in the C-terminal section; belongs to the CbiQ family. In terms of assembly, forms an energy-coupling factor (ECF) transporter complex composed of an ATP-binding protein (A component, CbiO), a transmembrane protein (T component, CbiQ) and 2 possible substrate-capture proteins (S components, CbiM and CbiN) of unknown stoichimetry.

The protein localises to the cell membrane. Its pathway is cofactor biosynthesis; adenosylcobalamin biosynthesis. Functionally, part of the energy-coupling factor (ECF) transporter complex CbiMNOQ involved in cobalt import. In Methanocorpusculum labreanum (strain ATCC 43576 / DSM 4855 / Z), this protein is Putative fused cobalt transport protein CbiMQ (cbiMQ).